The primary structure comprises 55 residues: Large ribosomal subunit protein bL33 (55 aa).

The protein belongs to the bacterial ribosomal protein bL33 family.

This chain is Large ribosomal subunit protein bL33, found in Xanthobacter autotrophicus (strain ATCC BAA-1158 / Py2).